Reading from the N-terminus, the 519-residue chain is Chaperone SurA (519 aa).

The first 31 residues, 1–31, serve as a signal peptide directing secretion; the sequence is MMRSLHSLRRMSGTVLALMLAAGLPLSAAQA. Low complexity-rich tracts occupy residues 31–45 and 197–207; these read AQPA…QKPA and PAAAQATRAPA. 2 disordered regions span residues 31–50 and 196–221; these read AQPA…PAPS and NPAA…PAQS. The region spanning 223–324 is the PpiC 1 domain; that stretch reads PAMLVLAQIL…NGFHILKVVD (102 aa). The segment at 328–361 is disordered; sequence GGQPAQAARPAPAPAPQQPSSFQEGPSVAAPQGP. The PpiC 2 domain occupies 364–463; the sequence is VTQTHARHIL…FGWHLIQVLE (100 aa).

The protein localises to the periplasm. It carries out the reaction [protein]-peptidylproline (omega=180) = [protein]-peptidylproline (omega=0). In terms of biological role, chaperone involved in the correct folding and assembly of outer membrane proteins. Recognizes specific patterns of aromatic residues and the orientation of their side chains, which are found more frequently in integral outer membrane proteins. May act in both early periplasmic and late outer membrane-associated steps of protein maturation. This is Chaperone SurA from Bordetella parapertussis (strain 12822 / ATCC BAA-587 / NCTC 13253).